The sequence spans 454 residues: Bifunctional protein GlmU (454 aa).

The tract at residues 1-226 (MALNVVILAA…AIEVEGANNR (226 aa)) is pyrophosphorylase. UDP-N-acetyl-alpha-D-glucosamine contacts are provided by residues 8 to 11 (LAAG), Lys22, Gln73, 78 to 79 (GT), 100 to 102 (YGD), Gly137, Glu151, Asn166, and Asn224. Asp102 lines the Mg(2+) pocket. Residue Asn224 coordinates Mg(2+). The segment at 227–247 (VQLAQLERAYQAREAEKLMLA) is linker. An N-acetyltransferase region spans residues 248–454 (GANLRDPHRI…DWKRPVKIKK (207 aa)). Residues Arg330 and Lys348 each coordinate UDP-N-acetyl-alpha-D-glucosamine. His360 acts as the Proton acceptor in catalysis. Tyr363 and Asn374 together coordinate UDP-N-acetyl-alpha-D-glucosamine. Residues Ala377, 383–384 (NY), Ser402, Ala420, and Arg437 contribute to the acetyl-CoA site.

The protein in the N-terminal section; belongs to the N-acetylglucosamine-1-phosphate uridyltransferase family. In the C-terminal section; belongs to the transferase hexapeptide repeat family. As to quaternary structure, homotrimer. It depends on Mg(2+) as a cofactor.

The protein resides in the cytoplasm. The enzyme catalyses alpha-D-glucosamine 1-phosphate + acetyl-CoA = N-acetyl-alpha-D-glucosamine 1-phosphate + CoA + H(+). It carries out the reaction N-acetyl-alpha-D-glucosamine 1-phosphate + UTP + H(+) = UDP-N-acetyl-alpha-D-glucosamine + diphosphate. The protein operates within nucleotide-sugar biosynthesis; UDP-N-acetyl-alpha-D-glucosamine biosynthesis; N-acetyl-alpha-D-glucosamine 1-phosphate from alpha-D-glucosamine 6-phosphate (route II): step 2/2. It participates in nucleotide-sugar biosynthesis; UDP-N-acetyl-alpha-D-glucosamine biosynthesis; UDP-N-acetyl-alpha-D-glucosamine from N-acetyl-alpha-D-glucosamine 1-phosphate: step 1/1. It functions in the pathway bacterial outer membrane biogenesis; LPS lipid A biosynthesis. Catalyzes the last two sequential reactions in the de novo biosynthetic pathway for UDP-N-acetylglucosamine (UDP-GlcNAc). The C-terminal domain catalyzes the transfer of acetyl group from acetyl coenzyme A to glucosamine-1-phosphate (GlcN-1-P) to produce N-acetylglucosamine-1-phosphate (GlcNAc-1-P), which is converted into UDP-GlcNAc by the transfer of uridine 5-monophosphate (from uridine 5-triphosphate), a reaction catalyzed by the N-terminal domain. This is Bifunctional protein GlmU from Shewanella putrefaciens (strain CN-32 / ATCC BAA-453).